Consider the following 206-residue polypeptide: Large ribosomal subunit protein eL13x (206 aa).

A disordered region spans residues 186–206 (NARHAGARAKRAAEAEKEEKK). A compositionally biased stretch (basic and acidic residues) spans 196-206 (RAAEAEKEEKK).

It belongs to the eukaryotic ribosomal protein eL13 family.

This Arabidopsis thaliana (Mouse-ear cress) protein is Large ribosomal subunit protein eL13x (RPL13D).